Reading from the N-terminus, the 305-residue chain is Urease accessory protein UreD (305 aa).

It belongs to the UreD family. As to quaternary structure, ureD, UreF and UreG form a complex that acts as a GTP-hydrolysis-dependent molecular chaperone, activating the urease apoprotein by helping to assemble the nickel containing metallocenter of UreC. The UreE protein probably delivers the nickel.

The protein resides in the cytoplasm. Functionally, required for maturation of urease via the functional incorporation of the urease nickel metallocenter. In Delftia acidovorans (strain DSM 14801 / SPH-1), this protein is Urease accessory protein UreD.